The following is a 103-amino-acid chain: Cyanovirin-N homolog (103 aa).

It belongs to the cyanovirin-N family.

Its function is as follows. Mannose-binding lectin. This chain is Cyanovirin-N homolog, found in Tuber borchii (White truffle).